Consider the following 494-residue polypeptide: Hydroxyneurosporene desaturase (494 aa).

This sequence belongs to the carotenoid/retinoid oxidoreductase family.

It catalyses the reaction rhodopin + A = (3E)-3,4-didehydrorhodopin + AH2. It participates in carotenoid biosynthesis; spheroidene biosynthesis. Its function is as follows. Catalyzes the introduction of C-3,4 double bonds into 1-hydroxyneurosporene (1-HO-Neu) to yield demethylspheroidene (DMS). In Rhodobacter capsulatus (strain ATCC BAA-309 / NBRC 16581 / SB1003), this protein is Hydroxyneurosporene desaturase (crtD).